Here is a 21-residue protein sequence, read N- to C-terminus: Thioredoxin (21 aa).

Lys3 is modified (N6-acetyllysine). Residue Lys8 is modified to N6-succinyllysine.

Belongs to the thioredoxin family. Homodimer; disulfide-linked. Interacts with TXNIP through the redox-active site. Interacts with MAP3K5 and CASP3. Interacts with APEX1; the interaction stimulates the FOS/JUN AP-1 DNA-binding activity in a redox-dependent manner.

It localises to the nucleus. Its subcellular location is the cytoplasm. It is found in the secreted. In terms of biological role, participates in various redox reactions through the reversible oxidation of its active center dithiol to a disulfide and catalyzes dithiol-disulfide exchange reactions. Plays a role in the reversible S-nitrosylation of cysteine residues in target proteins, and thereby contributes to the response to intracellular nitric oxide. Nitrosylates the active site Cys of CASP3 in response to nitric oxide (NO), and thereby inhibits caspase-3 activity. Induces the FOS/JUN AP-1 DNA binding activity in ionizing radiation (IR) cells through its oxidation/reduction status and stimulates AP-1 transcriptional activity. The polypeptide is Thioredoxin (TXN) (Canis lupus familiaris (Dog)).